We begin with the raw amino-acid sequence, 137 residues long: Small ribosomal subunit protein uS12 (137 aa).

3-methylthioaspartic acid is present on D102.

Belongs to the universal ribosomal protein uS12 family. In terms of assembly, part of the 30S ribosomal subunit. Contacts proteins S8 and S17. May interact with IF1 in the 30S initiation complex.

Its function is as follows. With S4 and S5 plays an important role in translational accuracy. Interacts with and stabilizes bases of the 16S rRNA that are involved in tRNA selection in the A site and with the mRNA backbone. Located at the interface of the 30S and 50S subunits, it traverses the body of the 30S subunit contacting proteins on the other side and probably holding the rRNA structure together. The combined cluster of proteins S8, S12 and S17 appears to hold together the shoulder and platform of the 30S subunit. The polypeptide is Small ribosomal subunit protein uS12 (Mesoplasma florum (strain ATCC 33453 / NBRC 100688 / NCTC 11704 / L1) (Acholeplasma florum)).